The following is a 1116-amino-acid chain: Angiopoietin-1 receptor (1116 aa).

The N-terminal stretch at 1–21 is a signal peptide; the sequence is MCLLDSCTALLLLGCWMSGSA. Topologically, residues 22-745 are extracellular; it reads VRISDVTLVN…FAAHGHLLLY (724 aa). Cys-46 and Cys-106 form a disulfide bridge. The Ig-like C2-type 1 domain occupies 46-126; sequence CVSSDWSSGG…YTYKMLQEAA (81 aa). 3 N-linked (GlcNAc...) asparagine glycosylation sites follow: Asn-110, Asn-143, and Asn-223. EGF-like domains lie at 214–256, 258–302, and 304–342; these read SCRA…HTCD, VCGE…LSCN, and ACPDGYYGAGCTQKCVCAKGRCDRFRGCVCAGRHGSRCE. Disulfide bonds link Cys-215-Cys-224, Cys-228-Cys-237, Cys-231-Cys-244, Cys-246-Cys-255, Cys-259-Cys-268, Cys-272-Cys-277, Cys-283-Cys-290, Cys-292-Cys-301, Cys-305-Cys-314, Cys-318-Cys-325, Cys-320-Cys-331, and Cys-333-Cys-341. An Ig-like C2-type 2 domain is found at 348–438; it reads PVISHLRDVE…MQVEDEFTVE (91 aa). N-linked (GlcNAc...) asparagine glycans are attached at residues Asn-367, Asn-387, and Asn-425. Cys-368 and Cys-422 are oxidised to a cystine. Fibronectin type-III domains follow at residues 444 to 538, 540 to 633, and 634 to 729; these read RPQN…TQVL, LPVG…QLPP, and PPAN…TLPQ. N-linked (GlcNAc...) asparagine glycans are attached at residues Asn-590, Asn-637, and Asn-642. A helical transmembrane segment spans residues 746–766; that stretch reads AILGSAGMTCCTVLLAFCIVL. Residues 767–1116 are Cytoplasmic-facing; sequence QLKRNTLQRR…GIDCSAEEAG (350 aa). A Protein kinase domain is found at 816–1095; sequence IQFQDVLGEG…RMLEERKTYV (280 aa). ATP contacts are provided by residues 822–830 and Lys-847; that span reads LGEGNFGQV. Tyr-852 carries the post-translational modification Phosphotyrosine; by autocatalysis. Catalysis depends on Asp-956, which acts as the Proton acceptor. Phosphotyrosine; by autocatalysis occurs at positions 984, 1094, and 1100.

It belongs to the protein kinase superfamily. Tyr protein kinase family. Tie subfamily. In terms of assembly, interacts with svep1. In terms of processing, autophosphorylated on tyrosine residues in response to ligand binding. Autophosphorylation occurs in trans, i.e. one subunit of the dimeric receptor phosphorylates tyrosine residues on the other subunit. Autophosphorylation occurs in a sequential manner, where Tyr-984 in the kinase activation loop is phosphorylated first, followed by autophosphorylation at additional tyrosine residues. Phosphorylation is important for interaction with scaffold proteins and effectors.

It is found in the cell membrane. It localises to the cell junction. Its subcellular location is the focal adhesion. The protein resides in the cytoplasm. The protein localises to the cytoskeleton. It catalyses the reaction L-tyrosyl-[protein] + ATP = O-phospho-L-tyrosyl-[protein] + ADP + H(+). With respect to regulation, angiopoietin binding leads to receptor dimerization and activation by autophosphorylation at Tyr-984 on the kinase activation loop. Functionally, tyrosine-protein kinase that acts as a cell-surface receptor for angiopoietins and regulates angiogenesis, endothelial cell survival, proliferation, migration, adhesion and cell spreading, reorganization of the actin cytoskeleton, but also maintenance of vascular quiescence. Can activate or inhibit angiogenesis, depending on the context. Angiopoietin signaling triggers receptor dimerization and autophosphorylation at specific tyrosine residues that then serve as binding sites for scaffold proteins and effectors. The protein is Angiopoietin-1 receptor of Danio rerio (Zebrafish).